Consider the following 114-residue polypeptide: Hydrogenase maturation factor HypA (114 aa).

Histidine 2 serves as a coordination point for Ni(2+). The Zn(2+) site is built by cysteine 73, cysteine 76, cysteine 89, and cysteine 92.

The protein belongs to the HypA/HybF family.

Functionally, involved in the maturation of [NiFe] hydrogenases. Required for nickel insertion into the metal center of the hydrogenase. This Syntrophus aciditrophicus (strain SB) protein is Hydrogenase maturation factor HypA.